Here is a 417-residue protein sequence, read N- to C-terminus: MAVQAALLSSHPFIPFGFGGSADGLVSAFGSLDKGCCFEDDESGASAGALLSGSEGGDVREATRDLLSFIDSASSNIKLALDKPGKSKRKVNHRKYLQKQIKRCSGLMGTAPPRPASPSAADAPAKRPPGAPTVATPAHCKAAPRREATQAAAAASLQSRSLAALFDSLRHIPGGAETAGGAEAVSVPGLGAASAVGDGAGTAVSSVAPGTRKVPLRARNLPPSFFTEPSRVGCGGASGVPSGQGVSLGDLEKGAEAVEFFELLAPDFGSGNDSGVLMAADPLDPFPAGATVLRGPLELESGPFEQPAMVGNLLYPEPWNTPSCPQTKKPPVAGVRGGVTLNEPVRLLYPTALDSPGGEDAPALSSFTPFFPDCALPPPHQVSYDYSAGYSRAVYPSLWRPDGVWEGASGEEGGHPD.

Residues 104–147 (CSGLMGTAPPRPASPSAADAPAKRPPGAPTVATPAHCKAAPRRE) form a disordered region.

The protein belongs to the FAM181 family.

The polypeptide is Protein FAM181B (Fam181b) (Mus musculus (Mouse)).